A 138-amino-acid polypeptide reads, in one-letter code: Transcription antitermination protein NusB (138 aa).

The protein belongs to the NusB family.

In terms of biological role, involved in transcription antitermination. Required for transcription of ribosomal RNA (rRNA) genes. Binds specifically to the boxA antiterminator sequence of the ribosomal RNA (rrn) operons. This is Transcription antitermination protein NusB from Limosilactobacillus reuteri (strain DSM 20016) (Lactobacillus reuteri).